The chain runs to 398 residues: Putative glutamate--cysteine ligase 2 (398 aa).

Belongs to the glutamate--cysteine ligase type 2 family. YbdK subfamily.

The enzyme catalyses L-cysteine + L-glutamate + ATP = gamma-L-glutamyl-L-cysteine + ADP + phosphate + H(+). Its function is as follows. ATP-dependent carboxylate-amine ligase which exhibits weak glutamate--cysteine ligase activity. The protein is Putative glutamate--cysteine ligase 2 of Micrococcus luteus (strain ATCC 4698 / DSM 20030 / JCM 1464 / CCM 169 / CCUG 5858 / IAM 1056 / NBRC 3333 / NCIMB 9278 / NCTC 2665 / VKM Ac-2230) (Micrococcus lysodeikticus).